A 266-amino-acid chain; its full sequence is NADP-dependent mannitol dehydrogenase (266 aa).

Serine 53, asparagine 107, and lysine 140 together coordinate NADP(+). The active-site Proton donor is the serine 159. Tyrosine 174, lysine 178, isoleucine 206, and threonine 208 together coordinate NADP(+). The active-site Proton acceptor is the tyrosine 174. The active-site Lowers pKa of active site Tyr is lysine 178.

This sequence belongs to the short-chain dehydrogenases/reductases (SDR) family. As to quaternary structure, homotetramer.

The catalysed reaction is D-mannitol + NADP(+) = D-fructose + NADPH + H(+). D-mannitol 2-dehydrogenase which is not necessary for D-mannitol catabolism. D-mannitol metabolism occurs via at least two different routes involving mannitol dehydrogenase (MDH) or mannitol 1-phosphate dehydrogenase, and the exact physiological role of mannitol dehydrogenases remains unclear. This Hypocrea jecorina (strain ATCC 56765 / BCRC 32924 / NRRL 11460 / Rut C-30) (Trichoderma reesei) protein is NADP-dependent mannitol dehydrogenase.